We begin with the raw amino-acid sequence, 279 residues long: Thymidylate synthase (279 aa).

133–134 (RR) is a dUMP binding site. C154 functions as the Nucleophile in the catalytic mechanism. DUMP-binding positions include 178-181 (RSND), N189, and 219-221 (HIY). D181 provides a ligand contact to (6R)-5,10-methylene-5,6,7,8-tetrahydrofolate. A278 contributes to the (6R)-5,10-methylene-5,6,7,8-tetrahydrofolate binding site.

The protein belongs to the thymidylate synthase family. Bacterial-type ThyA subfamily. Homodimer.

It localises to the cytoplasm. It carries out the reaction dUMP + (6R)-5,10-methylene-5,6,7,8-tetrahydrofolate = 7,8-dihydrofolate + dTMP. It functions in the pathway pyrimidine metabolism; dTTP biosynthesis. Its function is as follows. Catalyzes the reductive methylation of 2'-deoxyuridine-5'-monophosphate (dUMP) to 2'-deoxythymidine-5'-monophosphate (dTMP) while utilizing 5,10-methylenetetrahydrofolate (mTHF) as the methyl donor and reductant in the reaction, yielding dihydrofolate (DHF) as a by-product. This enzymatic reaction provides an intracellular de novo source of dTMP, an essential precursor for DNA biosynthesis. The sequence is that of Thymidylate synthase from Streptococcus sanguinis (strain SK36).